We begin with the raw amino-acid sequence, 255 residues long: Diphthine synthase (255 aa).

Residues Leu9, Asp85, Val88, Ser113–Ile114, Leu164, Ala207, and His232 contribute to the S-adenosyl-L-methionine site.

It belongs to the diphthine synthase family. As to quaternary structure, homodimer.

It carries out the reaction 2-[(3S)-amino-3-carboxypropyl]-L-histidyl-[translation elongation factor 2] + 3 S-adenosyl-L-methionine = diphthine-[translation elongation factor 2] + 3 S-adenosyl-L-homocysteine + 3 H(+). Its pathway is protein modification; peptidyl-diphthamide biosynthesis. Functionally, S-adenosyl-L-methionine-dependent methyltransferase that catalyzes the trimethylation of the amino group of the modified target histidine residue in translation elongation factor 2 (EF-2), to form an intermediate called diphthine. The three successive methylation reactions represent the second step of diphthamide biosynthesis. This chain is Diphthine synthase, found in Methanococcus maripaludis (strain C5 / ATCC BAA-1333).